A 275-amino-acid polypeptide reads, in one-letter code: MSQQLQQIIDTAWENRAELSPKAAPADVREAVAHAIEQLDKGLLRVAEKKDGDWVVNQWLKKAVLLSFRLEDNAPMPAGGYSQFYDKVPSKFANYTAEDFAAGGFRVVPPAIARRGSFIAKNVVLMPSYTNIGAYVDEGSMVDTWATVGSCAQIGKNVHLSGGVGIGGVLEPLQANPVIIEDNCFIGARSEVVEGVIVEENSVISMGVYLGQSTKIYDRETGEVTYGRIPAGSVVVAGNLPSKDGTHSLYCAVIVKKVDAKTRAKVGLNELLRGD.

Belongs to the transferase hexapeptide repeat family.

The protein resides in the cytoplasm. It catalyses the reaction (S)-2,3,4,5-tetrahydrodipicolinate + succinyl-CoA + H2O = (S)-2-succinylamino-6-oxoheptanedioate + CoA. It functions in the pathway amino-acid biosynthesis; L-lysine biosynthesis via DAP pathway; LL-2,6-diaminopimelate from (S)-tetrahydrodipicolinate (succinylase route): step 1/3. The sequence is that of 2,3,4,5-tetrahydropyridine-2,6-dicarboxylate N-succinyltransferase from Paraburkholderia phytofirmans (strain DSM 17436 / LMG 22146 / PsJN) (Burkholderia phytofirmans).